The primary structure comprises 938 residues: Isoleucine--tRNA ligase (938 aa).

Positions 58–68 (PYANGSIHIGH) match the 'HIGH' region motif. Glu561 provides a ligand contact to L-isoleucyl-5'-AMP. A 'KMSKS' region motif is present at residues 602–606 (KMSKS). Residue Lys605 participates in ATP binding. Zn(2+)-binding residues include Cys901, Cys904, Cys921, and Cys924.

It belongs to the class-I aminoacyl-tRNA synthetase family. IleS type 1 subfamily. Monomer. Zn(2+) serves as cofactor.

It is found in the cytoplasm. It carries out the reaction tRNA(Ile) + L-isoleucine + ATP = L-isoleucyl-tRNA(Ile) + AMP + diphosphate. Its function is as follows. Catalyzes the attachment of isoleucine to tRNA(Ile). As IleRS can inadvertently accommodate and process structurally similar amino acids such as valine, to avoid such errors it has two additional distinct tRNA(Ile)-dependent editing activities. One activity is designated as 'pretransfer' editing and involves the hydrolysis of activated Val-AMP. The other activity is designated 'posttransfer' editing and involves deacylation of mischarged Val-tRNA(Ile). The chain is Isoleucine--tRNA ligase from Citrobacter koseri (strain ATCC BAA-895 / CDC 4225-83 / SGSC4696).